The following is a 749-amino-acid chain: Formate acetyltransferase (749 aa).

The 617-residue stretch at 3 to 619 folds into the PFL domain; sequence ETNKNHATAW…KTGNTPDGRK (617 aa). The S-acetylcysteine intermediate role is filled by C413. C414 acts as the Cysteine radical intermediate in catalysis. Positions 626–749 constitute a Glycine radical domain; sequence PGANPMHGRD…VISRTFHESM (124 aa). Glycine radical is present on G724.

The protein belongs to the glycyl radical enzyme (GRE) family. PFL subfamily. In terms of assembly, homodimer.

It is found in the cytoplasm. The enzyme catalyses formate + acetyl-CoA = pyruvate + CoA. It participates in fermentation; pyruvate fermentation; formate from pyruvate: step 1/1. Its function is as follows. Catalyzes the conversion of pyruvate to formate and acetyl-CoA. In Staphylococcus aureus (strain USA300), this protein is Formate acetyltransferase (pflB).